Consider the following 570-residue polypeptide: Periplasmic trehalase (570 aa).

The first 34 residues, 1–34 (MIPPEIRRSVLLQKAIKLALAGTLLTFASFSATA), serve as a signal peptide directing secretion. Residues Arg159, 166 to 167 (WD), Asn203, 212 to 214 (RSQ), 284 to 286 (RPE), and Gly317 contribute to the substrate site. Residues Asp319 and Glu503 each act as proton donor/acceptor in the active site. Glu518 lines the substrate pocket. Residues 544–570 (KPCDSVPSTRPASLSATPTKTPSAATQ) are disordered. Positions 554-570 (PASLSATPTKTPSAATQ) are enriched in low complexity.

This sequence belongs to the glycosyl hydrolase 37 family. In terms of assembly, monomer.

The protein localises to the periplasm. The enzyme catalyses alpha,alpha-trehalose + H2O = alpha-D-glucose + beta-D-glucose. Provides the cells with the ability to utilize trehalose at high osmolarity by splitting it into glucose molecules that can subsequently be taken up by the phosphotransferase-mediated uptake system. This Salmonella typhimurium (strain LT2 / SGSC1412 / ATCC 700720) protein is Periplasmic trehalase.